The sequence spans 253 residues: MICMYRIEVEDLNVYFDEAHILKDINLKIPKNTVTALIGPSGCGKSTFIRTLNRMNDVISGFRHEGHVYLDGKDIYDPDMDVVELRKKVGMVFQKPNPFPKSIFENVAYGLRVHGYDDRDFIEERVEESLRAAALWDEVKDKLDKSALGLSGGQQQRLCIARTIAIEPEVILMDEPCSALDPISTTKIEDLIHKLKNDYTIIIVTHNMQQATRVSKYTAFFLHGEIVESGLTEQIFIEPRDKRTEDYITGRFG.

One can recognise an ABC transporter domain in the interval 7 to 248 (IEVEDLNVYF…PRDKRTEDYI (242 aa)). 39–46 (GPSGCGKS) provides a ligand contact to ATP.

It belongs to the ABC transporter superfamily. Phosphate importer (TC 3.A.1.7) family. As to quaternary structure, the complex is composed of two ATP-binding proteins (PstB), two transmembrane proteins (PstC and PstA) and a solute-binding protein (PstS).

It is found in the cell membrane. It carries out the reaction phosphate(out) + ATP + H2O = ADP + 2 phosphate(in) + H(+). Functionally, part of the ABC transporter complex PstSACB involved in phosphate import. Responsible for energy coupling to the transport system. The polypeptide is Phosphate import ATP-binding protein PstB (Methanothermobacter thermautotrophicus (strain ATCC 29096 / DSM 1053 / JCM 10044 / NBRC 100330 / Delta H) (Methanobacterium thermoautotrophicum)).